Here is a 469-residue protein sequence, read N- to C-terminus: 6-phosphofructo-2-kinase/fructose-2,6-bisphosphatase 4 (469 aa).

Positions 1–249 (MASPRELTQN…YYLMNIHVTP (249 aa)) are 6-phosphofructo-2-kinase. Phosphoserine; by PKC is present on S29. 46 to 54 (GLPARGKTY) contacts ATP. Positions 79 and 103 each coordinate beta-D-fructose 6-phosphate. D129 is a catalytic residue. Beta-D-fructose 6-phosphate is bound by residues T131 and R137. C159 is a catalytic residue. 168–173 (NIVQVK) is a binding site for ATP. The beta-D-fructose 6-phosphate site is built by K173, R194, and Y198. A fructose-2,6-bisphosphatase region spans residues 250 to 469 (RSIYLCRHGE…EALVTVPAHQ (220 aa)). R256 contacts beta-D-fructose 2,6-bisphosphate. H257 serves as the catalytic Tele-phosphohistidine intermediate. Beta-D-fructose 2,6-bisphosphate contacts are provided by N263, G269, and R306. E326 acts as the Proton donor/acceptor in catalysis. Residues Y337, R351, K355, Y366, Q392, and R396 each contribute to the beta-D-fructose 2,6-bisphosphate site. An ATP-binding site is contributed by 348-351 (FALR). Residues 392–396 (QAVMR) and Y428 contribute to the ATP site. T444 bears the Phosphothreonine; by PKC mark.

In the C-terminal section; belongs to the phosphoglycerate mutase family. As to quaternary structure, homodimer. As to expression, testis.

The catalysed reaction is beta-D-fructose 2,6-bisphosphate + H2O = beta-D-fructose 6-phosphate + phosphate. It carries out the reaction beta-D-fructose 6-phosphate + ATP = beta-D-fructose 2,6-bisphosphate + ADP + H(+). Its activity is regulated as follows. The most important regulatory mechanism of these opposing activities is by phosphorylation and dephosphorylation of the enzyme. In terms of biological role, synthesis and degradation of fructose 2,6-bisphosphate. This chain is 6-phosphofructo-2-kinase/fructose-2,6-bisphosphatase 4 (Pfkfb4), found in Rattus norvegicus (Rat).